The following is an 806-amino-acid chain: Leucine--tRNA ligase (806 aa).

Residues 40-51 (PYPSGKGLHVGH) carry the 'HIGH' region motif. The short motif at 580–584 (KMSKS) is the 'KMSKS' region element. Lys583 serves as a coordination point for ATP.

This sequence belongs to the class-I aminoacyl-tRNA synthetase family.

The protein localises to the cytoplasm. The enzyme catalyses tRNA(Leu) + L-leucine + ATP = L-leucyl-tRNA(Leu) + AMP + diphosphate. This chain is Leucine--tRNA ligase, found in Ureaplasma parvum serovar 3 (strain ATCC 27815 / 27 / NCTC 11736).